Here is a 270-residue protein sequence, read N- to C-terminus: Phosphoribosylformylglycinamidine synthase subunit PurQ (270 aa).

The Glutamine amidotransferase type-1 domain maps to 5–251 (ALVLHATGTN…VIRERDSEEE (247 aa)). Cys95 acts as the Nucleophile in catalysis. Catalysis depends on residues His236 and Glu238.

Part of the FGAM synthase complex composed of 1 PurL, 1 PurQ and 2 PurS subunits.

It is found in the cytoplasm. It catalyses the reaction N(2)-formyl-N(1)-(5-phospho-beta-D-ribosyl)glycinamide + L-glutamine + ATP + H2O = 2-formamido-N(1)-(5-O-phospho-beta-D-ribosyl)acetamidine + L-glutamate + ADP + phosphate + H(+). The enzyme catalyses L-glutamine + H2O = L-glutamate + NH4(+). It participates in purine metabolism; IMP biosynthesis via de novo pathway; 5-amino-1-(5-phospho-D-ribosyl)imidazole from N(2)-formyl-N(1)-(5-phospho-D-ribosyl)glycinamide: step 1/2. Its function is as follows. Part of the phosphoribosylformylglycinamidine synthase complex involved in the purines biosynthetic pathway. Catalyzes the ATP-dependent conversion of formylglycinamide ribonucleotide (FGAR) and glutamine to yield formylglycinamidine ribonucleotide (FGAM) and glutamate. The FGAM synthase complex is composed of three subunits. PurQ produces an ammonia molecule by converting glutamine to glutamate. PurL transfers the ammonia molecule to FGAR to form FGAM in an ATP-dependent manner. PurS interacts with PurQ and PurL and is thought to assist in the transfer of the ammonia molecule from PurQ to PurL. The protein is Phosphoribosylformylglycinamidine synthase subunit PurQ of Treponema denticola (strain ATCC 35405 / DSM 14222 / CIP 103919 / JCM 8153 / KCTC 15104).